An 843-amino-acid polypeptide reads, in one-letter code: Receptor-like serine/threonine-protein kinase SD1-7 (843 aa).

A signal peptide spans 1–31; that stretch reads MRSVPNYHHSFFIFLILILFLAFSVSPNTLS. Positions 32–151 constitute a Bulb-type lectin domain; that stretch reads ATESLTISSN…NNRLLWQSFD (120 aa). At 32-435 the chain is on the extracellular side; that stretch reads ATESLTISSN…LEDKRIKNEK (404 aa). 5 N-linked (GlcNAc...) asparagine glycosylation sites follow: Asn41, Asn92, Asn116, Asn236, and Asn251. Positions 286-322 constitute an EGF-like; atypical domain; the sequence is PKDLCDNYKVCGNFGYCDSNSLPNCYCIKGFKPVNEQ. Disulfide bonds link Cys290–Cys302, Cys296–Cys310, Cys372–Cys397, and Cys376–Cys382. The PAN domain occupies 341-422; that stretch reads CDGRDGFTRL…GGQDLYVRLA (82 aa). N-linked (GlcNAc...) asparagine glycosylation is present at Asn381. A helical transmembrane segment spans residues 436 to 456; the sequence is IIGSSIGVSILLLLSFVIFHF. At 457–843 the chain is on the cytoplasmic side; the sequence is WKRKQKRSIT…QITLSVIDAR (387 aa). The Protein kinase domain maps to 519-809; sequence FSNDNKLGQG…AIPQPKRPGF (291 aa). Residues 525–533 and Lys547 contribute to the ATP site; that span reads LGQGGFGIV. Ser553 is subject to Phosphoserine. The caM-binding stretch occupies residues 608 to 625; sequence TRSSNLNWQKRFDIINGI. The active-site Proton acceptor is Asp644. Phosphoserine occurs at positions 648 and 661. Phosphothreonine is present on Thr678. Residue Ser820 is modified to Phosphoserine.

This sequence belongs to the protein kinase superfamily. Ser/Thr protein kinase family. In terms of assembly, interacts with PUB9, PUB13, PUB14 and PUB38. Post-translationally, autophosphorylated on serine and threonine residues. As to expression, mostly expressed in leaves, and, to a lower extent, in stems and flower buds.

Its subcellular location is the cell membrane. It carries out the reaction L-seryl-[protein] + ATP = O-phospho-L-seryl-[protein] + ADP + H(+). It catalyses the reaction L-threonyl-[protein] + ATP = O-phospho-L-threonyl-[protein] + ADP + H(+). In terms of biological role, involved in the regulation of cellular expansion and differentiation. Mediates subcellular relocalization of PUB9 from nucleus to plasma membrane in a protein-phosphorylation-dependent manner. May be involved in the abscisic acid-mediated signaling pathway, at least during germination. This Arabidopsis thaliana (Mouse-ear cress) protein is Receptor-like serine/threonine-protein kinase SD1-7 (SD17).